Here is a 470-residue protein sequence, read N- to C-terminus: Tert-butanol monooxygenase / tert-amyl alcohol desaturase oxygenase subunit (470 aa).

The region spanning 51 to 155 (WQPVCLSQEL…AFERNGLVFA (105 aa)) is the Rieske domain. Residues Cys91, His93, Cys110, and His113 each contribute to the [2Fe-2S] cluster site.

The protein belongs to the bacterial ring-hydroxylating dioxygenase alpha subunit family. In terms of assembly, this two-component enzyme is composed of an oxygenase (MdpJ) and a reductase (MdpK). The cofactor is [2Fe-2S] cluster.

The enzyme catalyses tert-butanol + NADPH + O2 + H(+) = 2-methylpropane-1,2-diol + NADP(+) + H2O. It catalyses the reaction 2-methylbutan-2-ol + NADPH + O2 + H(+) = 3-hydroxy-3-methylbut-1-ene + NADP(+) + 2 H2O. Oxygenase component of a two-component system involved in the degradation of tertiary alcohols such as tert-butyl alcohol (TBA) and tert-amyl alcohol (TAA). In the presence of TBA, catalyzes the hydroxylation of TBA to 2-methylpropane-1,2-diol. In the presence of TAA, functions as a desaturase, enabling the degradation of TAA and resulting in the formation of the hemiterpene 3-hydroxy-3-methylbut-1-ene. The specificity of the catalysis depends strongly on the molecule structure of the substrate, allowing either hydroxylation or desaturation reactions. Also catalyzes the desaturation of the tertiary alcohol 3-methyl-3-pentanol (a C6 homolog of TBA and TAA) to 3-methyl-1-penten-3-ol, with lower efficiency. In addition, can transform some secondary alcohols, including the hydroxylation of 2-propanol to 1,2-propanediol, and the desaturation of 2-butanol, 3-methyl-2-butanol and 3-pentanol. The polypeptide is Tert-butanol monooxygenase / tert-amyl alcohol desaturase oxygenase subunit (Aquincola tertiaricarbonis).